The following is a 101-amino-acid chain: Small ribosomal subunit protein uS14 (101 aa).

The disordered stretch occupies residues Leu51–Gly72. Polar residues predominate over residues Pro52 to Arg65.

It belongs to the universal ribosomal protein uS14 family. In terms of assembly, part of the 30S ribosomal subunit. Contacts proteins S3 and S10.

Functionally, binds 16S rRNA, required for the assembly of 30S particles and may also be responsible for determining the conformation of the 16S rRNA at the A site. In Buchnera aphidicola subsp. Acyrthosiphon kondoi (Acyrthosiphon kondoi symbiotic bacterium), this protein is Small ribosomal subunit protein uS14.